The primary structure comprises 894 residues: Mitogen-activated protein kinase kinase kinase kinase 3 (894 aa).

At Met-1 the chain carries N-acetylmethionine. One can recognise a Protein kinase domain in the interval 16–273; it reads FELIQRIGSG…AEKLLQHPFV (258 aa). ATP is bound by residues 22–30 and Lys-45; that span reads IGSGTYGDV. The active-site Proton acceptor is the Asp-136. A Phosphoserine modification is found at Ser-329. The disordered stretch occupies residues 339–358; sequence DPPLRKETEPHHELPDSDGF. Residues 340–353 are compositionally biased toward basic and acidic residues; that stretch reads PPLRKETEPHHELP. Ser-398 is subject to Phosphoserine. The interval 408–537 is disordered; sequence HVAHLEDDEG…VPKPISNGLP (130 aa). Pro residues predominate over residues 473–487; that stretch reads HVPPRPPPPRLPPQK. Over residues 508 to 520 the composition is skewed to polar residues; it reads LYQQQSEQRGTNL. In terms of domain architecture, CNH spans 556–867; the sequence is PLKIHCATSW…IFRLLGSDRV (312 aa).

The protein belongs to the protein kinase superfamily. STE Ser/Thr protein kinase family. STE20 subfamily. In terms of assembly, interacts with SH3GL2. Interaction appears to regulate MAP4K3-mediated JNK activation. Mg(2+) serves as cofactor.

It carries out the reaction L-seryl-[protein] + ATP = O-phospho-L-seryl-[protein] + ADP + H(+). The catalysed reaction is L-threonyl-[protein] + ATP = O-phospho-L-threonyl-[protein] + ADP + H(+). Functionally, serine/threonine kinase that plays a role in the response to environmental stress. Appears to act upstream of the JUN N-terminal pathway. Activator of the Hippo signaling pathway which plays a pivotal role in organ size control and tumor suppression by restricting proliferation and promoting apoptosis. MAP4Ks act in parallel to and are partially redundant with STK3/MST2 and STK4/MST2 in the phosphorylation and activation of LATS1/2, and establish MAP4Ks as components of the expanded Hippo pathway. This Mus musculus (Mouse) protein is Mitogen-activated protein kinase kinase kinase kinase 3 (Map4k3).